A 795-amino-acid chain; its full sequence is TBC1 domain family member 5 (795 aa).

Positions 1 to 13 are enriched in basic and acidic residues; it reads MYHSLSETRHPLQ. A disordered region spans residues 1-49; sequence MYHSLSETRHPLQPEEQEVGIDPLSSYSNKSGGDSNKNGRRTSSTLDSE. The span at 25–49 shows a compositional bias: polar residues; the sequence is SSYSNKSGGDSNKNGRRTSSTLDSE. A Phosphothreonine modification is found at Thr42. Phosphoserine is present on residues Ser43 and Ser44. A required for interaction with retromer; involved in interaction with ATG8 family proteins region spans residues 56 to 64; the sequence is RKEWEELFV. An LIR 1 motif is present at residues 57–62; that stretch reads KEWEEL. The Rab-GAP TBC domain maps to 81–359; it reads LRSSRFRSIC…VVWDALFADG (279 aa). Ser460 is modified (phosphoserine). The tract at residues 475-564 is disordered; sequence PGSAGGPVPG…PPSSATKKDS (90 aa). A compositionally biased stretch (low complexity) spans 484 to 496; sequence GGNSSSSSSVVIP. Residues Ser522, Ser539, Ser541, Ser544, Ser554, Ser570, Ser584, and Ser730 each carry the phosphoserine modification. Residues 523 to 542 show a composition bias toward polar residues; that stretch reads MPVQLNKGLSSKNISSSPSV. The segment covering 554-564 has biased composition (polar residues); it reads SPPSSATKKDS. The segment at 674-795 is disordered; the sequence is HYCSSGQGQG…GFTIVSPLDI (122 aa). Polar residues predominate over residues 727 to 748; it reads ARGSFSGQAQPLRTLRSTSGKS. Residues 765–776 are compositionally biased toward low complexity; sequence PASASSSNPSSS. The LIR 2 signature appears at 785 to 789; the sequence is SGFTI. Residues 786–791 are required for interaction with ATG8 family proteins; that stretch reads GFTIVS. Ser791 bears the Phosphoserine mark.

In terms of assembly, interacts with MAP1LC3A, MAP1LC3B, MAP1LC3C, GABARAP, GABARAPL1, GABARAPL2. Interacts with VPS29 and VPS35; indicative for an association with retromer CSC subcomplex. MAP1LC3A and VPS29 compete for binding to TBC1D5. Interacts with AP2M1; indicative for an association with the AP2 complex. Interacts with ULK1 and ATG13 (phosphorylated); indicative for an association with the activated ULK1-ATG13-FIP200 complex. Interacts with ATG9A; the interactions seems to be restricted to the AP2-clathrin-associated fraction of ATG9A.

The protein resides in the endosome membrane. The protein localises to the cytoplasmic vesicle. Its subcellular location is the autophagosome. May act as a GTPase-activating protein (GAP) for Rab family protein(s). May act as a GAP for RAB7A. Can displace RAB7A and retromer CSC subcomplex from the endosomal membrane to the cytosol; at least retromer displacement seems to require its catalytic activity. Required for retrograde transport of cargo proteins from endosomes to the trans-Golgi network (TGN); the function seems to require its catalytic activity. Involved in regulation of autophagy. May act as a molecular switch between endosomal and autophagosomal transport and is involved in reprogramming vesicle trafficking upon autophagy induction. Involved in the trafficking of ATG9A upon activation of autophagy. May regulate the recruitment of ATG9A-AP2-containing vesicles to autophagic membranes. The polypeptide is TBC1 domain family member 5 (TBC1D5) (Homo sapiens (Human)).